We begin with the raw amino-acid sequence, 410 residues long: Argininosuccinate synthase (410 aa).

9–17 (AYSGGLDTS) lines the ATP pocket. Tyr86 contacts L-citrulline. Gly116 serves as a coordination point for ATP. Thr118, Asn122, and Asp123 together coordinate L-aspartate. Asn122 contacts L-citrulline. 4 residues coordinate L-citrulline: Arg126, Ser174, Glu259, and Tyr271.

It belongs to the argininosuccinate synthase family. Type 1 subfamily. As to quaternary structure, homotetramer.

The protein localises to the cytoplasm. The catalysed reaction is L-citrulline + L-aspartate + ATP = 2-(N(omega)-L-arginino)succinate + AMP + diphosphate + H(+). Its pathway is amino-acid biosynthesis; L-arginine biosynthesis; L-arginine from L-ornithine and carbamoyl phosphate: step 2/3. This is Argininosuccinate synthase from Limosilactobacillus reuteri (strain DSM 20016) (Lactobacillus reuteri).